A 217-amino-acid polypeptide reads, in one-letter code: Adr-2-binding protein 1 (217 aa).

Residues 33–65 form a disordered region; the sequence is ARPEPQHDSLKRRNTTSSIAKKKAKMTRGDEQI. Basic residues predominate over residues 44 to 58; sequence RRNTTSSIAKKKAKM.

As to quaternary structure, interacts with double-stranded RNA-specific adenosine deaminase adr-2. Expressed in main body hypodermal cells, the hypodermal seam cells, pharynx, intestine and some neurons.

Its subcellular location is the nucleus. Functionally, required for the A-I editing activity of the double-stranded RNA-specific adenosine deaminase adr-2 by facilitating adr-2 nuclear localization. This chain is Adr-2-binding protein 1, found in Caenorhabditis elegans.